The sequence spans 437 residues: tRNA-2-methylthio-N(6)-dimethylallyladenosine synthase (437 aa).

The region spanning Met-1–Ala-115 is the MTTase N-terminal domain. 6 residues coordinate [4Fe-4S] cluster: Cys-10, Cys-46, Cys-78, Cys-148, Cys-152, and Cys-155. Residues Lys-134–Glu-367 enclose the Radical SAM core domain. A TRAM domain is found at Lys-370 to Gly-436.

The protein belongs to the methylthiotransferase family. MiaB subfamily. As to quaternary structure, monomer. [4Fe-4S] cluster is required as a cofactor.

Its subcellular location is the cytoplasm. It carries out the reaction N(6)-dimethylallyladenosine(37) in tRNA + (sulfur carrier)-SH + AH2 + 2 S-adenosyl-L-methionine = 2-methylsulfanyl-N(6)-dimethylallyladenosine(37) in tRNA + (sulfur carrier)-H + 5'-deoxyadenosine + L-methionine + A + S-adenosyl-L-homocysteine + 2 H(+). Its function is as follows. Catalyzes the methylthiolation of N6-(dimethylallyl)adenosine (i(6)A), leading to the formation of 2-methylthio-N6-(dimethylallyl)adenosine (ms(2)i(6)A) at position 37 in tRNAs that read codons beginning with uridine. In Helicobacter pylori (strain G27), this protein is tRNA-2-methylthio-N(6)-dimethylallyladenosine synthase.